Reading from the N-terminus, the 129-residue chain is Protein yippee-like (129 aa).

Positions 12–109 constitute a Yippee domain; sequence KIYSCKHCGT…LERFKITGPD (98 aa). C16, C19, C72, and C75 together coordinate Zn(2+).

The protein belongs to the yippee family.

The polypeptide is Protein yippee-like (Solanum tuberosum (Potato)).